The following is a 324-amino-acid chain: MTKRTIVVGTRQSQLALTQTEQVIGDLKELCRAHGLPFEFEIKKIVTKGDRILDVTLSKIGGKGLFVKEIEQAMLDGEIDMAVHSMKDMPSVLPEGLINGGVPLRKDPRDALISRSGLHLHELPQGARVGTSTLRRSSQLLAYRPDLVLEPVRGNIDSRLRKLEEEGFDAIILAAAGLQRMGWENRVTAYLSADVCLPAVGQGALGIECRENDAELRDVLSLYNDPDTALTVAAERRFLAVLNGGCQVPIAAYANLERAGGQAPEEGGRAAASQAPAALRIRLTGMVGSADGRGYFEGECRREDPVAFGERIAGLLLAQGGRVT.

An S-(dipyrrolylmethanemethyl)cysteine modification is found at Cys246. An insert region spans residues 261 to 279 (GQAPEEGGRAAASQAPAAL).

The protein belongs to the HMBS family. As to quaternary structure, monomer. The cofactor is dipyrromethane.

The catalysed reaction is 4 porphobilinogen + H2O = hydroxymethylbilane + 4 NH4(+). Its pathway is porphyrin-containing compound metabolism; protoporphyrin-IX biosynthesis; coproporphyrinogen-III from 5-aminolevulinate: step 2/4. In terms of biological role, tetrapolymerization of the monopyrrole PBG into the hydroxymethylbilane pre-uroporphyrinogen in several discrete steps. The sequence is that of Porphobilinogen deaminase (hemC) from Paenibacillus macerans (Bacillus macerans).